Here is a 42-residue protein sequence, read N- to C-terminus: Purine nucleoside phosphorylase DeoD-type (42 aa).

8–9 is an a purine D-ribonucleoside binding site; sequence SD. D9 (proton donor) is an active-site residue.

The protein belongs to the PNP/UDP phosphorylase family. As to quaternary structure, homohexamer; trimer of homodimers.

The enzyme catalyses a purine D-ribonucleoside + phosphate = a purine nucleobase + alpha-D-ribose 1-phosphate. It catalyses the reaction a purine 2'-deoxy-D-ribonucleoside + phosphate = a purine nucleobase + 2-deoxy-alpha-D-ribose 1-phosphate. Catalyzes the reversible phosphorolytic breakdown of the N-glycosidic bond in the beta-(deoxy)ribonucleoside molecules, with the formation of the corresponding free purine bases and pentose-1-phosphate. This chain is Purine nucleoside phosphorylase DeoD-type, found in Mycoplasmoides pirum (Mycoplasma pirum).